The chain runs to 859 residues: Envelope glycoprotein gp160 (859 aa).

The N-terminal stretch at 1-24 is a signal peptide; that stretch reads MERGRNQLLIAILLASACLIYCRQ. The Extracellular portion of the chain corresponds to 25-680; the sequence is QYVTVFYGVP…LTSWISYIQY (656 aa). Asparagine 38 carries an N-linked (GlcNAc...) asparagine; by host glycan. Cysteines 45 and 58 form a disulfide. N-linked (GlcNAc...) asparagine; by host glycosylation is found at asparagine 71, asparagine 115, asparagine 148, asparagine 163, asparagine 176, asparagine 188, asparagine 195, asparagine 205, asparagine 237, asparagine 247, asparagine 271, asparagine 277, asparagine 288, asparagine 299, asparagine 309, asparagine 343, asparagine 366, asparagine 398, asparagine 411, asparagine 448, asparagine 463, and asparagine 467. 5 disulfides stabilise this stretch: cysteine 102/cysteine 213, cysteine 109/cysteine 204, cysteine 114/cysteine 160, cysteine 226/cysteine 256, and cysteine 236/cysteine 248. The V1 stretch occupies residues 114 to 159; that stretch reads CNISTSDTTMIRTTTPSTAKEAPISDNSPCIRTNNCSGLEEEKIVK. Positions 160 to 204 are V2; that stretch reads CHFNMTGLERDKKKQYNETWYSSDVVCDNSTDQTTNETTCYMNHC. A V3 region spans residues 304 to 337; the sequence is CRRPGNKTVVPITLMSGQRFHSRPIINKRPRQAW. A disulfide bridge links cysteine 304 with cysteine 338. Intrachain disulfides connect cysteine 390/cysteine 447 and cysteine 397/cysteine 420. The segment at 397–420 is V4; the sequence is CNMTWFLNWVENKPNTTKRNYAPC. Positions 463–470 are V5; that stretch reads NQTTNITF. The tract at residues 513–533 is fusion peptide; the sequence is GAFVLGFLGFLTTAGVAMGTA. Residues 576–592 form an immunosuppression region; it reads LQARVTAIEKYLKDQAQ. Asparagine 612, asparagine 621, and asparagine 637 each carry an N-linked (GlcNAc...) asparagine; by host glycan. The stretch at 625–646 forms a coiled coil; it reads QEWEQKVRYLEANISQSLEEAQ. The tract at residues 658–679 is MPER; binding to GalCer; sequence KLNNWDVFTNWFDLTSWISYIQ. A helical transmembrane segment spans residues 681 to 701; that stretch reads GVYIVVGIIVLRIVIYVVQML. The Cytoplasmic segment spans residues 702–859; sequence SRLRKGYRPV…IRQGAELALL (158 aa). The YXXV motif; contains endocytosis signal motif lies at 708–711; sequence YRPV. The segment at 726 to 745 is disordered; it reads KDPEQPASEETEEDVGGNGG. A lipid anchor (S-palmitoyl cysteine; by host) is attached at cysteine 774. Positions 858 to 859 match the Di-leucine internalization motif motif; that stretch reads LL.

In terms of assembly, the mature envelope protein (Env) consists of a homotrimer of non-covalently associated gp120-gp41 heterodimers. The resulting complex protrudes from the virus surface as a spike. There seems to be as few as 10 spikes on the average virion. Interacts with human CD4, CCR5 and CXCR4, to form a P4HB/PDI-CD4-CXCR4-gp120 complex. Gp120 also interacts with the C-type lectins CD209/DC-SIGN and CLEC4M/DC-SIGNR (collectively referred to as DC-SIGN(R)). Gp120 and gp41 interact with GalCer. As to quaternary structure, the mature envelope protein (Env) consists of a homotrimer of non-covalently associated gp120-gp41 heterodimers. The resulting complex protrudes from the virus surface as a spike. There seems to be as few as 10 spikes on the average virion. In terms of processing, specific enzymatic cleavages in vivo yield mature proteins. Envelope glycoproteins are synthesized as an inactive precursor that is heavily N-glycosylated and processed likely by host cell furin in the Golgi to yield the mature SU and TM proteins. The cleavage site between SU and TM requires the minimal sequence [KR]-X-[KR]-R. Post-translationally, palmitoylation of the transmembrane protein and of Env polyprotein (prior to its proteolytic cleavage) is essential for their association with host cell membrane lipid rafts. Palmitoylation is therefore required for envelope trafficking to classical lipid rafts, but not for viral replication.

It is found in the virion membrane. The protein resides in the host cell membrane. It localises to the host endosome membrane. The surface protein gp120 (SU) attaches the virus to the host lymphoid cell by binding to the primary receptor CD4. This interaction induces a structural rearrangement creating a high affinity binding site for a chemokine coreceptor like CXCR4 and/or CCR5. This peculiar 2 stage receptor-interaction strategy allows gp120 to maintain the highly conserved coreceptor-binding site in a cryptic conformation, protected from neutralizing antibodies. Since CD4 also displays a binding site for the disulfide-isomerase P4HB/PDI, a P4HB/PDI-CD4-CXCR4-gp120 complex may form. In that complex, P4HB/PDI could reach and reduce gp120 disulfide bonds, causing major conformational changes in gp120. TXN, another PDI family member could also be involved in disulfide rearrangements in Env during fusion. These changes are transmitted to the transmembrane protein gp41 and are thought to activate its fusogenic potential by unmasking its fusion peptide. Its function is as follows. The surface protein gp120 is a ligand for CD209/DC-SIGN and CLEC4M/DC-SIGNR, which are respectively found on dendritic cells (DCs), and on endothelial cells of liver sinusoids and lymph node sinuses. These interactions allow capture of viral particles at mucosal surfaces by these cells and subsequent transmission to permissive cells. DCs are professional antigen presenting cells, critical for host immunity by inducing specific immune responses against a broad variety of pathogens. They act as sentinels in various tissues where they take up antigen, process it, and present it to T-cells following migration to lymphoid organs. HIV subverts the migration properties of dendritic cells to gain access to CD4+ T-cells in lymph nodes. Virus transmission to permissive T-cells occurs either in trans (without DCs infection, through viral capture and transmission), or in cis (following DCs productive infection, through the usual CD4-gp120 interaction), thereby inducing a robust infection. In trans infection, bound virions remain infectious over days and it is proposed that they are not degraded, but protected in non-lysosomal acidic organelles within the DCs close to the cell membrane thus contributing to the viral infectious potential during DCs' migration from the periphery to the lymphoid tissues. On arrival at lymphoid tissues, intact virions recycle back to DCs' cell surface allowing virus transmission to CD4+ T-cells. Virion capture also seems to lead to MHC-II-restricted viral antigen presentation, and probably to the activation of HIV-specific CD4+ cells. In terms of biological role, the transmembrane protein gp41 (TM) acts as a class I viral fusion protein. Under the current model, the protein has at least 3 conformational states: pre-fusion native state, pre-hairpin intermediate state, and post-fusion hairpin state. During fusion of viral and target intracellular membranes, the coiled coil regions (heptad repeats) assume a trimer-of-hairpins structure, positioning the fusion peptide in close proximity to the C-terminal region of the ectodomain. The formation of this structure appears to drive apposition and subsequent fusion of viral and target cell membranes. Complete fusion occurs in host cell endosomes and is dynamin-dependent, however some lipid transfer might occur at the plasma membrane. The virus undergoes clathrin-dependent internalization long before endosomal fusion, thus minimizing the surface exposure of conserved viral epitopes during fusion and reducing the efficacy of inhibitors targeting these epitopes. Membranes fusion leads to delivery of the nucleocapsid into the cytoplasm. Functionally, the envelope glycoprotein gp160 precursor down-modulates cell surface CD4 antigen by interacting with it in the endoplasmic reticulum and blocking its transport to the cell surface. The gp120-gp41 heterodimer seems to contribute to T-cell depletion during HIV-1 infection. The envelope glycoproteins expressed on the surface of infected cells induce apoptosis through an interaction with uninfected cells expressing the receptor (CD4) and the coreceptors CXCR4 or CCR5. This type of bystander killing may be obtained by at least three distinct mechanisms. First, the interaction between the 2 cells can induce cellular fusion followed by nuclear fusion within the syncytium. Syncytia are condemned to die from apoptosis. Second, the 2 interacting cells may not fuse entirely and simply exchange plasma membrane lipids, after a sort of hemifusion process, followed by rapid death. Third, it is possible that virus-infected cells, on the point of undergoing apoptosis, fuse with CD4-expressing cells, in which case apoptosis is rapidly transmitted from one cell to the other and thus occurs in a sort of contagious fashion. Its function is as follows. The gp120-gp41 heterodimer allows rapid transcytosis of the virus through CD4 negative cells such as simple epithelial monolayers of the intestinal, rectal and endocervical epithelial barriers. Both gp120 and gp41 specifically recognize glycosphingolipids galactosyl-ceramide (GalCer) or 3' sulfo-galactosyl-ceramide (GalS) present in the lipid rafts structures of epithelial cells. Binding to these alternative receptors allows the rapid transcytosis of the virus through the epithelial cells. This transcytotic vesicle-mediated transport of virions from the apical side to the basolateral side of the epithelial cells does not involve infection of the cells themselves. In Human immunodeficiency virus type 2 subtype A (isolate CAM2) (HIV-2), this protein is Envelope glycoprotein gp160 (env).